Here is a 207-residue protein sequence, read N- to C-terminus: uncharacterized protein (207 aa).

This is an uncharacterized protein from Bacillus subtilis (strain 168).